A 270-amino-acid chain; its full sequence is 5'-AMP-activated protein kinase subunit beta-1 (270 aa).

The disordered stretch occupies residues M1–D43. G2 carries the N-myristoyl glycine lipid modification. T4 is subject to Phosphothreonine. Phosphoserine occurs at positions 5 and 6. Residue T19 is modified to Phosphothreonine. The segment covering R21 to I36 has biased composition (basic and acidic residues). A phosphoserine; by autocatalysis mark is found at S24 and S25. Residues S40, S96, S101, and S108 each carry the phosphoserine modification. Residues E68–F163 form a glycogen-binding domain region. At T148 the chain carries Phosphothreonine. Phosphoserine is present on S182.

This sequence belongs to the 5'-AMP-activated protein kinase beta subunit family. In terms of assembly, AMPK is a heterotrimer of an alpha catalytic subunit (PRKAA1 or PRKAA2), a beta (PRKAB1 or PRKAB2) and a gamma non-catalytic subunits (PRKAG1, PRKAG2 or PRKAG3). Interacts with FNIP1 and FNIP2. Phosphorylated when associated with the catalytic subunit (PRKAA1 or PRKAA2). Phosphorylated by ULK1; leading to negatively regulate AMPK activity and suggesting the existence of a regulatory feedback loop between ULK1 and AMPK.

Non-catalytic subunit of AMP-activated protein kinase (AMPK), an energy sensor protein kinase that plays a key role in regulating cellular energy metabolism. In response to reduction of intracellular ATP levels, AMPK activates energy-producing pathways and inhibits energy-consuming processes: inhibits protein, carbohydrate and lipid biosynthesis, as well as cell growth and proliferation. AMPK acts via direct phosphorylation of metabolic enzymes, and by longer-term effects via phosphorylation of transcription regulators. Also acts as a regulator of cellular polarity by remodeling the actin cytoskeleton; probably by indirectly activating myosin. Beta non-catalytic subunit acts as a scaffold on which the AMPK complex assembles, via its C-terminus that bridges alpha (PRKAA1 or PRKAA2) and gamma subunits (PRKAG1, PRKAG2 or PRKAG3). This Homo sapiens (Human) protein is 5'-AMP-activated protein kinase subunit beta-1 (PRKAB1).